The sequence spans 408 residues: Arginine biosynthesis bifunctional protein ArgJ (408 aa).

Residues T158, K184, T195, E281, N403, and T408 each coordinate substrate. T195 serves as the catalytic Nucleophile.

Belongs to the ArgJ family. As to quaternary structure, heterotetramer of two alpha and two beta chains.

Its subcellular location is the cytoplasm. The enzyme catalyses N(2)-acetyl-L-ornithine + L-glutamate = N-acetyl-L-glutamate + L-ornithine. It catalyses the reaction L-glutamate + acetyl-CoA = N-acetyl-L-glutamate + CoA + H(+). It functions in the pathway amino-acid biosynthesis; L-arginine biosynthesis; L-ornithine and N-acetyl-L-glutamate from L-glutamate and N(2)-acetyl-L-ornithine (cyclic): step 1/1. Its pathway is amino-acid biosynthesis; L-arginine biosynthesis; N(2)-acetyl-L-ornithine from L-glutamate: step 1/4. Functionally, catalyzes two activities which are involved in the cyclic version of arginine biosynthesis: the synthesis of N-acetylglutamate from glutamate and acetyl-CoA as the acetyl donor, and of ornithine by transacetylation between N(2)-acetylornithine and glutamate. The protein is Arginine biosynthesis bifunctional protein ArgJ of Shouchella clausii (strain KSM-K16) (Alkalihalobacillus clausii).